Here is a 574-residue protein sequence, read N- to C-terminus: MAHKTAGQAMTELLEQWGVDHVYGIPGDSINEFIEELRHERNQLKFIQTRHEEVAALAAAAEAKLTGKIGVCLSIAGPGAVHLLNGLYDAKADGAPVLAIAGQVSSGEVGRDYFQEIKLEQMFEDVAVFNREVHSAESLPDLLNQAIRTAYSKKGVAVLSVSDDLFAEKIKREPVYTSPVYIEGNLEPKKEQLVTCAQYINNAKKPIILAGQGMKKAKRELLEFADKAAAPIVVTLPAKGVVPDKHPHFLGNLGQIGTKPAYEAMEECDLLIMLGTSFPYRDYLPDDTPAIQLDSDPAKIGKRYPVTAGLVCDSALGLRELTEYIERKEDRRFLNACTEHMQHWWNEIEKDETEATTPLKPQQVVARLQEAAADDAVLSVDVGTVTVWMARHFKMNANQDFIVSSWLATMGCGLPGAIAASLSEPERQAIAVCGDGGFSMVMQDLPTAVKYKLPITVVILNNENLGMIEYEQQVKGNIDYVTKLQNVDYAAFAESCGAKGIKVTKAEELAPAFHEALHSDQPVVVDVMIGNEPPLPGKITYGQAKGFSKYMLKNFFENQKFEMPSLKKSLKRLF.

The stretch at 28–55 (DSINEFIEELRHERNQLKFIQTRHEEVA) forms a coiled coil. Position 52 (Glu52) interacts with thiamine diphosphate. Residues 256–277 (IGTK…LGTS) and 294–313 (DSDP…LVCD) each bind FAD. The segment at 384 to 464 (TVTVWMARHF…ITVVILNNEN (81 aa)) is thiamine pyrophosphate binding. Positions 435 and 462 each coordinate Mg(2+).

Belongs to the TPP enzyme family. The cofactor is Mg(2+). Thiamine diphosphate is required as a cofactor.

The protein is Putative thiamine pyrophosphate-containing protein YdaP (ydaP) of Bacillus subtilis (strain 168).